We begin with the raw amino-acid sequence, 1044 residues long: Isoleucine--tRNA ligase (1044 aa).

The 'HIGH' region motif lies at 49–59; sequence PYCSGRIHLGT. Positions 591–595 match the 'KMSKS' region motif; it reads KMSKS. Lysine 594 contacts ATP.

This sequence belongs to the class-I aminoacyl-tRNA synthetase family. IleS type 2 subfamily. In terms of assembly, monomer. The cofactor is Zn(2+).

The protein resides in the cytoplasm. It catalyses the reaction tRNA(Ile) + L-isoleucine + ATP = L-isoleucyl-tRNA(Ile) + AMP + diphosphate. Functionally, catalyzes the attachment of isoleucine to tRNA(Ile). As IleRS can inadvertently accommodate and process structurally similar amino acids such as valine, to avoid such errors it has two additional distinct tRNA(Ile)-dependent editing activities. One activity is designated as 'pretransfer' editing and involves the hydrolysis of activated Val-AMP. The other activity is designated 'posttransfer' editing and involves deacylation of mischarged Val-tRNA(Ile). The sequence is that of Isoleucine--tRNA ligase from Methanothermobacter thermautotrophicus (strain ATCC 29096 / DSM 1053 / JCM 10044 / NBRC 100330 / Delta H) (Methanobacterium thermoautotrophicum).